A 257-amino-acid chain; its full sequence is tRNA pseudouridine synthase A (257 aa).

Asp-53 functions as the Nucleophile in the catalytic mechanism. Position 111 (Tyr-111) interacts with substrate.

It belongs to the tRNA pseudouridine synthase TruA family. As to quaternary structure, homodimer.

The enzyme catalyses uridine(38/39/40) in tRNA = pseudouridine(38/39/40) in tRNA. Its function is as follows. Formation of pseudouridine at positions 38, 39 and 40 in the anticodon stem and loop of transfer RNAs. The chain is tRNA pseudouridine synthase A from Xylella fastidiosa (strain M23).